Reading from the N-terminus, the 1159-residue chain is PAN2-PAN3 deadenylation complex catalytic subunit pan2 (1159 aa).

A WD repeat occupies 276–315; the sequence is ANVSFMLGIDISPSGEALAINDAECMVHLWGSPAKIHFNE. Residues 316-451 form a linker region; the sequence is MSKEVELADV…GAKLNGEAED (136 aa). The region spanning 452-821 is the USP domain; it reads DPLLKYSNVE…VPCVLAFQVK (370 aa). The 177-residue stretch at 872–1048 folds into the Exonuclease domain; it reads LDTEFVDLEK…IEDARMALRL (177 aa). The a divalent metal cation site is built by aspartate 873, glutamate 875, aspartate 982, and aspartate 1041. The disordered stretch occupies residues 1094–1159; it reads TAVTMQNTNS…GDFFGGSPLK (66 aa). Residues 1096 to 1106 show a composition bias toward polar residues; sequence VTMQNTNSGRN. A compositionally biased stretch (low complexity) spans 1107 to 1128; it reads TPTVPDAAGAPAVPASAPTTPG. Residues 1143-1153 are compositionally biased toward gly residues; that stretch reads TFSGPGAGDFF.

This sequence belongs to the peptidase C19 family. PAN2 subfamily. In terms of assembly, forms a heterotrimer with an asymmetric homodimer of the regulatory subunit pan3 to form the poly(A)-nuclease (PAN) deadenylation complex. It depends on a divalent metal cation as a cofactor.

It localises to the cytoplasm. The catalysed reaction is Exonucleolytic cleavage of poly(A) to 5'-AMP.. With respect to regulation, positively regulated by the regulatory subunit pan3. Its function is as follows. Catalytic subunit of the poly(A)-nuclease (PAN) deadenylation complex, one of two cytoplasmic mRNA deadenylases involved in mRNA turnover. PAN specifically shortens poly(A) tails of RNA and the activity is stimulated by poly(A)-binding protein pab1. PAN deadenylation is followed by rapid degradation of the shortened mRNA tails by the CCR4-NOT complex. Deadenylated mRNAs are then degraded by two alternative mechanisms, namely exosome-mediated 3'-5' exonucleolytic degradation, or deadenylation-dependent mRNA decaping and subsequent 5'-3' exonucleolytic degradation by xrn1. May also be involved in post-transcriptional maturation of mRNA poly(A) tails. The protein is PAN2-PAN3 deadenylation complex catalytic subunit pan2 of Aspergillus terreus (strain NIH 2624 / FGSC A1156).